The primary structure comprises 291 residues: 5-hydroxytryptamine receptor 1D (291 aa).

A helical transmembrane segment spans residues 30 to 54 (LCDIWLSSDITCCTASILHLCVIAL). An intrachain disulfide couples Cys31 to Cys108. Serotonin is bound by residues Asp38 and Cys42. The DRY motif; important for ligand-induced conformation changes signature appears at 55-57 (DRY). Residues 75–96 (AAAMIAIVWAISICISIPPLFW) traverse the membrane as a helical segment. Asn111 carries an N-linked (GlcNAc...) asparagine glycan. Helical transmembrane passes span 115–138 (ISYTIYSTCGAFYIPSLLLIILYG), 221–246 (KTLGIILGAFIICWLPFFVASLVLPI), and 256–279 (ALFDFFTWLGYLNSLINPIIYTVF). Ser241 is a serotonin binding site. Residues 272 to 276 (NPIIY) carry the NPxxY motif; important for ligand-induced conformation changes and signaling motif.

The protein belongs to the G-protein coupled receptor 1 family. In terms of assembly, homodimer. Heterodimer with HTR1B.

Its subcellular location is the cell membrane. Functionally, G-protein coupled receptor for 5-hydroxytryptamine (serotonin). Also functions as a receptor for ergot alkaloid derivatives, various anxiolytic and antidepressant drugs and other psychoactive substances. Ligand binding causes a conformation change that triggers signaling via guanine nucleotide-binding proteins (G proteins) and modulates the activity of downstream effectors, such as adenylate cyclase. HTR1D is coupled to G(i)/G(o) G alpha proteins and mediates inhibitory neurotransmission by inhibiting adenylate cyclase activity. Regulates the release of 5-hydroxytryptamine in the brain, and thereby affects neural activity. May also play a role in regulating the release of other neurotransmitters. May play a role in vasoconstriction. The polypeptide is 5-hydroxytryptamine receptor 1D (HTR1D) (Sus scrofa (Pig)).